Reading from the N-terminus, the 546-residue chain is CTP synthase (546 aa).

The interval 1 to 264 is amidoligase domain; it reads MRYIVVTGGV…TKYIMKAMRL (264 aa). Residue Ser12 participates in CTP binding. Residue Ser12 participates in UTP binding. ATP is bound by residues 13–18 and Asp70; that span reads GLGKGI. The Mg(2+) site is built by Asp70 and Glu140. CTP-binding positions include 147–149, 185–190, and Lys221; these read DIE and KTKPTQ. UTP is bound by residues 185–190 and Lys221; that span reads KTKPTQ. Residues 298–534 form the Glutamine amidotransferase type-1 domain; that stretch reads GSQCTDPMKD…VEAMKAQRLR (237 aa). Residue Gly357 participates in L-glutamine binding. Cys384 serves as the catalytic Nucleophile; for glutamine hydrolysis. L-glutamine-binding positions include 385-388, Glu408, and Arg464; that span reads FGMQ. Catalysis depends on residues His507 and Glu509.

Belongs to the CTP synthase family. In terms of assembly, homotetramer.

It catalyses the reaction UTP + L-glutamine + ATP + H2O = CTP + L-glutamate + ADP + phosphate + 2 H(+). The catalysed reaction is L-glutamine + H2O = L-glutamate + NH4(+). It carries out the reaction UTP + NH4(+) + ATP = CTP + ADP + phosphate + 2 H(+). The protein operates within pyrimidine metabolism; CTP biosynthesis via de novo pathway; CTP from UDP: step 2/2. With respect to regulation, allosterically activated by GTP, when glutamine is the substrate; GTP has no effect on the reaction when ammonia is the substrate. The allosteric effector GTP functions by stabilizing the protein conformation that binds the tetrahedral intermediate(s) formed during glutamine hydrolysis. Inhibited by the product CTP, via allosteric rather than competitive inhibition. Catalyzes the ATP-dependent amination of UTP to CTP with either L-glutamine or ammonia as the source of nitrogen. Regulates intracellular CTP levels through interactions with the four ribonucleotide triphosphates. This Methanothrix thermoacetophila (strain DSM 6194 / JCM 14653 / NBRC 101360 / PT) (Methanosaeta thermophila) protein is CTP synthase.